Reading from the N-terminus, the 63-residue chain is Beta-defensin 4 (63 aa).

The first 22 residues, 1 to 22, serve as a signal peptide directing secretion; it reads MRIHYLLFTFLLVLLSPLAAFT. At glutamine 23 the chain carries Pyrrolidone carboxylic acid. 3 disulfide bridges follow: cysteine 31/cysteine 59, cysteine 38/cysteine 52, and cysteine 42/cysteine 60.

Belongs to the beta-defensin family. In terms of tissue distribution, tongue, esophagus and trachea.

It is found in the secreted. Its function is as follows. Exhibits antimicrobial activity against Gram-negative bacteria and Gram-positive bacteria. May act as a ligand for C-C chemokine receptor CCR6. Can bind to mouse (but not human) CCR6 and induce chemotactic activity of CCR6-expressing cells. The sequence is that of Beta-defensin 4 (Defb4) from Mus musculus (Mouse).